Reading from the N-terminus, the 1182-residue chain is Exocyst complex component 4 (1182 aa).

The segment covering 236–250 (NKNSNSNNSNNTFKS) has biased composition (low complexity). 4 disordered regions span residues 236 to 262 (NKNS…PFKP), 376 to 427 (IPKM…SSNI), 525 to 545 (EETE…PKPT), and 921 to 968 (QQQQ…GSNN). Gly residues predominate over residues 392 to 409 (GSNGGGNNSMNGSGGING). Residues 410 to 426 (NGSTASSSSPTSSTSSN) show a composition bias toward low complexity. Positions 921-932 (QQQQQQQQQQQQ) are enriched in low complexity. The span at 933–968 (VDSIKTPSKLNSGINSGGNSTASNKENNSTTTGSNN) shows a compositional bias: polar residues.

It belongs to the SEC8 family. The exocyst complex is composed of sec3/exoc1, sec5/exoc2, sec6/exoc3, sec8/exoc4, sec10/exoc5, sec15/exoc6, exo70/exoc7 and exo84/exoc8.

The protein localises to the midbody. It localises to the midbody ring. The protein resides in the cell projection. Its subcellular location is the cytoplasm. It is found in the cytoskeleton. The protein localises to the microtubule organizing center. It localises to the centrosome. Component of the exocyst complex involved in the docking of exocytic vesicles with fusion sites on the plasma membrane. The chain is Exocyst complex component 4 (exoc4) from Dictyostelium discoideum (Social amoeba).